Reading from the N-terminus, the 511-residue chain is UDP-N-acetylmuramoyl-L-alanyl-D-glutamate--2,6-diaminopimelate ligase (511 aa).

Position 33 (serine 33) interacts with UDP-N-acetyl-alpha-D-muramoyl-L-alanyl-D-glutamate. An ATP-binding site is contributed by 118 to 124 (GTNGKTT). UDP-N-acetyl-alpha-D-muramoyl-L-alanyl-D-glutamate contacts are provided by residues 160–161 (TT), serine 187, glutamine 193, and arginine 195. Lysine 227 is modified (N6-carboxylysine). Meso-2,6-diaminopimelate is bound by residues arginine 403, 427–430 (DNPR), glycine 478, and glutamate 482. Positions 427–430 (DNPR) match the Meso-diaminopimelate recognition motif motif.

The protein belongs to the MurCDEF family. MurE subfamily. Mg(2+) is required as a cofactor. In terms of processing, carboxylation is probably crucial for Mg(2+) binding and, consequently, for the gamma-phosphate positioning of ATP.

It localises to the cytoplasm. It catalyses the reaction UDP-N-acetyl-alpha-D-muramoyl-L-alanyl-D-glutamate + meso-2,6-diaminopimelate + ATP = UDP-N-acetyl-alpha-D-muramoyl-L-alanyl-gamma-D-glutamyl-meso-2,6-diaminopimelate + ADP + phosphate + H(+). Its pathway is cell wall biogenesis; peptidoglycan biosynthesis. Its function is as follows. Catalyzes the addition of meso-diaminopimelic acid to the nucleotide precursor UDP-N-acetylmuramoyl-L-alanyl-D-glutamate (UMAG) in the biosynthesis of bacterial cell-wall peptidoglycan. This Prochlorococcus marinus subsp. pastoris (strain CCMP1986 / NIES-2087 / MED4) protein is UDP-N-acetylmuramoyl-L-alanyl-D-glutamate--2,6-diaminopimelate ligase.